We begin with the raw amino-acid sequence, 362 residues long: dTDP-glucose 4,6-dehydratase (362 aa).

Residues phenylalanine 11–isoleucine 12, aspartate 32–threonine 35, aspartate 58–isoleucine 59, leucine 80–serine 84, and threonine 99 contribute to the NAD(+) site. Serine 84 contacts substrate. A substrate-binding site is contributed by threonine 133. The active-site Proton donor is the aspartate 134. Catalysis depends on proton acceptor residues glutamate 135 and tyrosine 167. Tyrosine 167–lysine 171 is an NAD(+) binding site. Asparagine 196 is a substrate binding site. Position 197 (asparagine 197) interacts with NAD(+). Substrate is bound by residues lysine 206–leucine 207, proline 222–tyrosine 224, arginine 231, asparagine 266, and aspartate 300–histidine 304.

Belongs to the NAD(P)-dependent epimerase/dehydratase family. dTDP-glucose dehydratase subfamily. The cofactor is NAD(+).

It catalyses the reaction dTDP-alpha-D-glucose = dTDP-4-dehydro-6-deoxy-alpha-D-glucose + H2O. It participates in bacterial outer membrane biogenesis; LPS O-antigen biosynthesis. Catalyzes the dehydration of dTDP-D-glucose to form dTDP-4-dehydro-6-deoxy-D-glucose via a three-step process involving oxidation, dehydration and reduction. This reaction is a step in the biosynthesis of D-fucofuranose, a component of E.coli O52 O antigen. This is dTDP-glucose 4,6-dehydratase (rmlB) from Escherichia coli.